Here is a 306-residue protein sequence, read N- to C-terminus: ATP synthase gamma chain (306 aa).

The protein belongs to the ATPase gamma chain family. In terms of assembly, F-type ATPases have 2 components, CF(1) - the catalytic core - and CF(0) - the membrane proton channel. CF(1) has five subunits: alpha(3), beta(3), gamma(1), delta(1), epsilon(1). CF(0) has three main subunits: a, b and c.

The protein localises to the cell membrane. In terms of biological role, produces ATP from ADP in the presence of a proton gradient across the membrane. The gamma chain is believed to be important in regulating ATPase activity and the flow of protons through the CF(0) complex. This chain is ATP synthase gamma chain, found in Bifidobacterium adolescentis (strain ATCC 15703 / DSM 20083 / NCTC 11814 / E194a).